A 145-amino-acid chain; its full sequence is Large ribosomal subunit protein uL13 (145 aa).

It belongs to the universal ribosomal protein uL13 family. In terms of assembly, part of the 50S ribosomal subunit.

Its function is as follows. This protein is one of the early assembly proteins of the 50S ribosomal subunit, although it is not seen to bind rRNA by itself. It is important during the early stages of 50S assembly. This Brevibacillus brevis (strain 47 / JCM 6285 / NBRC 100599) protein is Large ribosomal subunit protein uL13.